Reading from the N-terminus, the 539-residue chain is Chloride channel CLIC-like protein 1 (539 aa).

The signal sequence occupies residues 1 to 18; the sequence is MLCRLLLCECLLLITGYA. Topologically, residues 19–184 are lumenal; that stretch reads HDDDWIDPTD…EDYFGVDPYN (166 aa). The disordered stretch occupies residues 41–61; that stretch reads KSQVRSGTSEKKEVSPDSSEA. The helical transmembrane segment at 185–205 threads the bilayer; that stretch reads VFMVLLCLLCLVVLVATELWT. Over 206 to 215 the chain is Cytoplasmic; that stretch reads YVRWYTQMKR. The chain crosses the membrane as a helical span at residues 216-236; it reads IFIISFLLSLAWNWIYLYKMA. Topologically, residues 237-329 are lumenal; the sequence is FAQHQANIAG…GEFIKALMKE (93 aa). The helical transmembrane segment at 330–350 threads the bilayer; it reads IPVLLQIPVLAILALAVLSFC. Topologically, residues 351-539 are cytoplasmic; it reads YGAGRSVPML…GTEPVSSPCG (189 aa). The tract at residues 361–410 is disordered; that stretch reads RHFGGPDREPPRALEPDDRRRQKGLDYRLHGGAGDADFSYRGPAGSIEQG. Positions 364 to 389 are enriched in basic and acidic residues; sequence GGPDREPPRALEPDDRRRQKGLDYRL. A phosphoserine mark is found at Ser429, Ser433, and Ser459. Positions 444-539 are disordered; the sequence is DTEAQEHPEV…GTEPVSSPCG (96 aa). A compositionally biased stretch (polar residues) spans 475 to 485; it reads STPTEYSQSAK. Thr476 bears the Phosphothreonine mark. Ser498, Ser513, and Ser521 each carry phosphoserine. A compositionally biased stretch (low complexity) spans 512–521; that stretch reads CSPPGGCPPS.

This sequence belongs to the chloride channel MCLC family. As to quaternary structure, homomultimers. Interacts with mitochondrial protein PIGBOS1 (via C-terminus); the interaction occurs at the mitochondria-associated endoplasmic reticulum (ER) membrane, a zone of contact between the ER and mitochondrial membranes, but does not appear to play a role in ER-mitochondria tethering and is not affected by ER stress. Interacts with CALR. As to expression, expressed in cerebellum (at protein level).

The protein localises to the endoplasmic reticulum membrane. It catalyses the reaction chloride(in) = chloride(out). The catalysed reaction is bromide(in) = bromide(out). The enzyme catalyses nitrate(in) = nitrate(out). It carries out the reaction fluoride(in) = fluoride(out). Activated by membrane phosphatidylinositol 4,5-bisphosphate (PI(4,5)P2, PIP2). Inhibited by lumenal Ca(2+). Its function is as follows. Anion-selective channel with Ca(2+)-dependent and voltage-independent gating. Permeable to small monovalent anions with selectivity for bromide &gt; chloride &gt; nitrate &gt; fluoride. Operates in the endoplasmic reticulum (ER) membrane where it mediates chloride efflux to compensate for the loss of positive charges from the ER lumen upon Ca(2+) release. Contributes to the maintenance of ER Ca(2+) pools and activation of unfolded protein response to prevent accumulation of misfolded proteins in the ER lumen. Particularly involved in ER homeostasis mechanisms underlying motor neurons and retinal photoreceptors survival. This is Chloride channel CLIC-like protein 1 from Mus musculus (Mouse).